The primary structure comprises 562 residues: MKAPVRALICQGIEALRSNGTLPTNTLPPDFVVERPKTRKHGDFATNVAMLLSKATGSNPRLLAQTLVAALPTSADIARIEIAGPGFINFHLHPVAYQRETINVLKQDNDYGRNLSGQSRTVGVEYVSANPTGPLHVGHGRAAAIGDCLARLLEANGWNVKREFYYNDAGVQIENLVRSVQARARGLKPGDALWPTDAYNGEYIADIAKAYLAGDSINMVDTIITSTKNVDDTAAIHHFAVNYLRNEQNHDLAAFNVDFDIYFLESSLYKDGKVEETVQKLINSGHTYEEGGALWLKSTHFGDDKDRVMRKSDGSYTYFVPDIAYHLSKWQRGYERAITELGADHHGSLARVHAGLQALEIGIPPGWPEYVLHQMVTVMRGGEEVKLSKRSGGYVTLRDLIEETSTDATRWFLIARKPDSQLTFDIDLARQKSNDNPVFYVQYAYARVCSLMHQAHEKNLNYDQTSGMASLDQLSDNTSLCLMIEISRYPEIVQIACELLEPHLIAQYLRELAHAFHTWYHNTPVLVENAVERNAKLTLACATRQVLANGLNLLGVGTPEKM.

The short motif at 129-139 is the 'HIGH' region element; that stretch reads ANPTGPLHVGH.

Belongs to the class-I aminoacyl-tRNA synthetase family. Monomer.

It is found in the cytoplasm. The catalysed reaction is tRNA(Arg) + L-arginine + ATP = L-arginyl-tRNA(Arg) + AMP + diphosphate. This chain is Arginine--tRNA ligase, found in Xylella fastidiosa (strain M23).